Reading from the N-terminus, the 368-residue chain is DNA replication and repair protein RecF (368 aa).

Glycine 30–threonine 37 contributes to the ATP binding site.

The protein belongs to the RecF family.

It localises to the cytoplasm. The RecF protein is involved in DNA metabolism; it is required for DNA replication and normal SOS inducibility. RecF binds preferentially to single-stranded, linear DNA. It also seems to bind ATP. The protein is DNA replication and repair protein RecF of Xanthomonas campestris pv. campestris (strain 8004).